Consider the following 201-residue polypeptide: High mobility group protein homolog 068R (201 aa).

2 consecutive DNA-binding regions (HMG box) follow at residues 70–138 (PKRN…ELEK) and 143–201 (TPSK…KAAK).

Belongs to the IIV-6 401R family.

The protein localises to the host nucleus. This chain is High mobility group protein homolog 068R, found in Invertebrate iridescent virus 3 (IIV-3).